A 414-amino-acid polypeptide reads, in one-letter code: Esterase FrsA (414 aa).

Belongs to the FrsA family.

It catalyses the reaction a carboxylic ester + H2O = an alcohol + a carboxylate + H(+). Its function is as follows. Catalyzes the hydrolysis of esters. The chain is Esterase FrsA from Salmonella typhi.